The chain runs to 406 residues: Argininosuccinate synthase (406 aa).

ATP-binding positions include A11 to S19 and A38. Residues Y91 and S96 each coordinate L-citrulline. G121 lines the ATP pocket. L-aspartate-binding residues include T123, N127, and D128. N127 is a binding site for L-citrulline. L-citrulline-binding residues include R131, S181, S190, E266, and Y278.

It belongs to the argininosuccinate synthase family. Type 1 subfamily. Homotetramer.

The protein localises to the cytoplasm. It catalyses the reaction L-citrulline + L-aspartate + ATP = 2-(N(omega)-L-arginino)succinate + AMP + diphosphate + H(+). Its pathway is amino-acid biosynthesis; L-arginine biosynthesis; L-arginine from L-ornithine and carbamoyl phosphate: step 2/3. The protein is Argininosuccinate synthase of Campylobacter jejuni subsp. jejuni serotype O:6 (strain 81116 / NCTC 11828).